The chain runs to 457 residues: Glucuronide carrier protein homolog (457 aa).

The Cytoplasmic segment spans residues 1 to 11; sequence MNQQLSWRTIV. The helical transmembrane segment at 12–34 threads the bilayer; that stretch reads GYSLGDVANNFAFAMGALFLLSY. The Periplasmic portion of the chain corresponds to 35-37; the sequence is YTD. Residues 38–60 form a helical membrane-spanning segment; it reads VAGVGAAAAGTMLLLVRVFDAFA. Topologically, residues 61–79 are cytoplasmic; the sequence is DVFAGRVVDSVNTRWGKFR. Residues 80-100 form a helical membrane-spanning segment; that stretch reads PFLLFGTAPLMIFSVLVFWVL. Topologically, residues 101–108 are periplasmic; sequence TDWSHGSK. Residues 109-129 traverse the membrane as a helical segment; that stretch reads VVYAYLTYMGLGLCYSLVNIP. Topologically, residues 130-146 are cytoplasmic; that stretch reads YGSLATAMTQQPQSRAR. Residues 147-167 traverse the membrane as a helical segment; the sequence is LGAARGIAASLTFVCLAFLIG. Residues 168–180 lie on the Periplasmic side of the membrane; the sequence is PSIKNSSPEEMVS. The chain crosses the membrane as a helical span at residues 181-201; sequence VYHFWTIVLAIAGMVLYFICF. Residues 202–228 are Cytoplasmic-facing; the sequence is KSTRENVVRIVAQPSLNISLQTLKRNR. A helical transmembrane segment spans residues 229 to 249; sequence PLFMLCIGALCVLISTFAVSA. The Periplasmic portion of the chain corresponds to 250 to 263; it reads SSLFYVRYVLNDTG. A helical transmembrane segment spans residues 264-284; sequence LFTVLVLVQNLVGTVASAPLV. At 285 to 296 the chain is on the cytoplasmic side; that stretch reads PGMVARIGKKNT. Residues 297–316 traverse the membrane as a helical segment; it reads FLIGALLGTCGYLLFFWVSV. Residues 317–320 are Periplasmic-facing; that stretch reads WSLP. Residues 321-343 form a helical membrane-spanning segment; the sequence is VALVALAIASIGQGVTMTVMWAL. The Cytoplasmic portion of the chain corresponds to 344–372; sequence EADTVEYGEYLTGVRIEGLTYSLFSFTRK. Residues 373–393 form a helical membrane-spanning segment; the sequence is CGQAIGGSIPAFILGLSGYIA. Residues 394–408 are Periplasmic-facing; the sequence is NQVQTPEVIMGIRTS. The helical transmembrane segment at 409–429 threads the bilayer; it reads IALVPCGFMLLAFVIIWFYPL. Topologically, residues 430-457 are cytoplasmic; it reads TDKKFKEIVVEIDNRKKVQQQLISDITN.

It belongs to the sodium:galactoside symporter (TC 2.A.2) family.

The protein localises to the cell inner membrane. The polypeptide is Glucuronide carrier protein homolog (uidB) (Escherichia coli (strain K12)).